Here is a 458-residue protein sequence, read N- to C-terminus: Glutamyl-tRNA reductase (458 aa).

Residues 49-52, Ser111, 116-118, and Gln122 contribute to the substrate site; these read TCNR and ETE. Cys50 acts as the Nucleophile in catalysis. 191-196 is a binding site for NADP(+); sequence GAGKMS. Basic and acidic residues-rich tracts occupy residues 426 to 440 and 448 to 458; these read IPKD…KEVE and ERGHHESDFHN. The interval 426–458 is disordered; that stretch reads IPKDGEEHSSSKEVESVTQSSTERGHHESDFHN.

The protein belongs to the glutamyl-tRNA reductase family. Homodimer.

The catalysed reaction is (S)-4-amino-5-oxopentanoate + tRNA(Glu) + NADP(+) = L-glutamyl-tRNA(Glu) + NADPH + H(+). The protein operates within porphyrin-containing compound metabolism; protoporphyrin-IX biosynthesis; 5-aminolevulinate from L-glutamyl-tRNA(Glu): step 1/2. Functionally, catalyzes the NADPH-dependent reduction of glutamyl-tRNA(Glu) to glutamate 1-semialdehyde (GSA). This chain is Glutamyl-tRNA reductase, found in Natranaerobius thermophilus (strain ATCC BAA-1301 / DSM 18059 / JW/NM-WN-LF).